The sequence spans 54 residues: Photosystem II reaction center protein L (54 aa).

The chain crosses the membrane as a helical span at residues Ser33 to Phe53.

The protein belongs to the PsbL family. As to quaternary structure, PSII is composed of 1 copy each of membrane proteins PsbA, PsbB, PsbC, PsbD, PsbE, PsbF, PsbH, PsbI, PsbJ, PsbK, PsbL, PsbM, PsbT, PsbX, PsbY, PsbZ, Psb30/Ycf12, at least 3 peripheral proteins of the oxygen-evolving complex and a large number of cofactors. It forms dimeric complexes.

The protein resides in the plastid. It is found in the chloroplast thylakoid membrane. Its function is as follows. One of the components of the core complex of photosystem II (PSII). PSII is a light-driven water:plastoquinone oxidoreductase that uses light energy to abstract electrons from H(2)O, generating O(2) and a proton gradient subsequently used for ATP formation. It consists of a core antenna complex that captures photons, and an electron transfer chain that converts photonic excitation into a charge separation. This subunit is found at the monomer-monomer interface and is required for correct PSII assembly and/or dimerization. This is Photosystem II reaction center protein L from Stigeoclonium helveticum (Green alga).